A 666-amino-acid polypeptide reads, in one-letter code: Kinesin-like protein Nod (666 aa).

One can recognise a Kinesin motor domain in the interval A8–L320. ATP is bound at residue G87–S94. The segment at G423 to N450 is disordered. A coiled-coil region spans residues E639–T666.

This sequence belongs to the TRAFAC class myosin-kinesin ATPase superfamily. Kinesin family. In terms of tissue distribution, in adult female, found in meiotically active ovaries.

Its subcellular location is the cytoplasm. It is found in the cytoskeleton. Functionally, required for the distributive chromosome segregation of non-exchange chromosomes during meiosis. May be a microtubule motor required to hold distributively 'paired' chromosomes at the metaphase plate until anaphase. The polypeptide is Kinesin-like protein Nod (nod) (Drosophila melanogaster (Fruit fly)).